A 1209-amino-acid chain; its full sequence is DNA-directed RNA polymerase subunit beta (1209 aa).

Basic and acidic residues predominate over residues 1173–1192; that stretch reads QQEKKKLAEEAAKKDDKPDE. The tract at residues 1173–1209 is disordered; that stretch reads QQEKKKLAEEAAKKDDKPDEPVDESDSSTSSDDKVSK.

Belongs to the RNA polymerase beta chain family. In terms of assembly, the RNAP catalytic core consists of 2 alpha, 1 beta, 1 beta' and 1 omega subunit. When a sigma factor is associated with the core the holoenzyme is formed, which can initiate transcription.

The catalysed reaction is RNA(n) + a ribonucleoside 5'-triphosphate = RNA(n+1) + diphosphate. Functionally, DNA-dependent RNA polymerase catalyzes the transcription of DNA into RNA using the four ribonucleoside triphosphates as substrates. This is DNA-directed RNA polymerase subunit beta from Lactobacillus johnsonii (strain CNCM I-12250 / La1 / NCC 533).